Consider the following 397-residue polypeptide: Decapping and exoribonuclease protein (397 aa).

Residues 1–10 (MEPRGTKRKA) show a composition bias toward basic residues. Residues 1 to 30 (MEPRGTKRKAEKTEVEKPLNKLPRAVPSLR) are disordered. Residues Arg58, Glu101, and 131 to 133 (WRG) contribute to the substrate site. Met185 serves as a coordination point for adenosine 3',5'-bisphosphate. Glu192 contacts Mg(2+). 2 residues coordinate substrate: Cys217 and Glu234. 4 residues coordinate Mg(2+): Glu234, Asp236, Glu253, and Leu254. Asp236 contributes to the adenosine 3',5'-bisphosphate binding site. The tract at residues 253-256 (ELKT) is adenosine 3',5'-bisphosphate; inhibitor. Positions 255 and 280 each coordinate substrate. An adenosine 3',5'-bisphosphate-binding site is contributed by Gln280. Residue Thr392 is modified to Phosphothreonine. Ser394 carries the post-translational modification Phosphoserine.

The protein belongs to the DXO/Dom3Z family. Requires Mg(2+) as cofactor.

It localises to the nucleus. The catalysed reaction is a 5'-end triphospho-ribonucleoside in mRNA + H2O = a 5'-end phospho-ribonucleoside in mRNA + diphosphate + H(+). It carries out the reaction a 5'-end NAD(+)-phospho-ribonucleoside in mRNA + H2O = a 5'-end phospho-ribonucleoside in mRNA + NAD(+) + H(+). It catalyses the reaction a 5'-end NAD(+)-phospho-ribonucleoside in snoRNA + H2O = a 5'-end phospho-ribonucleoside in snoRNA + NAD(+) + H(+). The enzyme catalyses a 5'-end (N(7)-methyl 5'-triphosphoguanosine)-ribonucleoside-ribonucleotide in mRNA + H2O = a (N(7)-methyl 5'-triphosphoguanosine)-nucleoside + a 5'-end phospho-ribonucleoside in mRNA + H(+). The catalysed reaction is a 5'-end FAD-phospho-ribonucleoside in mRNA + H2O = a 5'-end phospho-ribonucleoside in mRNA + FAD + H(+). It carries out the reaction a 5'-end CoA-ribonucleoside in mRNA + H2O = 3'-dephospho-CoA + a 5'-end phospho-ribonucleoside in mRNA + H(+). The 5'-3' exoribonuclease activity is inhibited by adenosine 3',5'-bisphosphate. Decapping enzyme for NAD-capped RNAs: specifically hydrolyzes the nicotinamide adenine dinucleotide (NAD) cap from a subset of RNAs by removing the entire NAD moiety from the 5'-end of an NAD-capped RNA. The NAD-cap is present at the 5'-end of some RNAs and snoRNAs. In contrast to the canonical 5'-end N7 methylguanosine (m7G) cap, the NAD cap promotes mRNA decay. Preferentially acts on NAD-capped transcripts in response to environmental stress. Also acts as a non-canonical decapping enzyme that removes the entire cap structure of m7G capped or incompletely capped RNAs and mediates their subsequent degradation. Specifically degrades pre-mRNAs with a defective 5'-end m7G cap and is part of a pre-mRNA capping quality control. Has decapping activity toward incomplete 5'-end m7G cap mRNAs such as unmethylated 5'-end-capped RNA (cap0), while it has no activity toward 2'-O-ribose methylated m7G cap (cap1). In contrast to canonical decapping enzymes DCP2 and NUDT16, which cleave the cap within the triphosphate linkage, the decapping activity releases the entire cap structure GpppN and a 5'-end monophosphate RNA. Also has 5'-3' exoribonuclease activities: The 5'-end monophosphate RNA is then degraded by the 5'-3' exoribonuclease activity, enabling this enzyme to decap and degrade incompletely capped mRNAs. Also possesses RNA 5'-pyrophosphohydrolase activity by hydrolyzing the 5'-end triphosphate to release pyrophosphates. Exhibits decapping activity towards FAD-capped RNAs. Exhibits decapping activity towards dpCoA-capped RNAs in vitro. The chain is Decapping and exoribonuclease protein from Mus musculus (Mouse).